The primary structure comprises 177 residues: Large ribosomal subunit protein uL6 (177 aa).

The protein belongs to the universal ribosomal protein uL6 family. As to quaternary structure, part of the 50S ribosomal subunit.

In terms of biological role, this protein binds to the 23S rRNA, and is important in its secondary structure. It is located near the subunit interface in the base of the L7/L12 stalk, and near the tRNA binding site of the peptidyltransferase center. This chain is Large ribosomal subunit protein uL6, found in Photobacterium profundum (strain SS9).